Here is a 1043-residue protein sequence, read N- to C-terminus: Isoleucine--tRNA ligase (1043 aa).

P46 and H57 together coordinate L-isoleucyl-5'-AMP. Residues 47–57 carry the 'HIGH' region motif; the sequence is PTANGLPHVGH. Positions 181 and 184 each coordinate Zn(2+). The L-valine site is built by H319 and D328. Zn(2+)-binding residues include C389, C392, C461, C464, C502, and C504. Residues E550, G551, D553, Q554, and H581 each contribute to the L-isoleucyl-5'-AMP site. The short motif at 591 to 595 is the 'KMSKS' region element; it reads KMSKS. K594 serves as a coordination point for ATP.

Belongs to the class-I aminoacyl-tRNA synthetase family. IleS type 2 subfamily. Monomer. Requires Zn(2+) as cofactor.

The protein localises to the cytoplasm. It catalyses the reaction tRNA(Ile) + L-isoleucine + ATP = L-isoleucyl-tRNA(Ile) + AMP + diphosphate. In terms of biological role, catalyzes the attachment of isoleucine to tRNA(Ile). As IleRS can inadvertently accommodate and process structurally similar amino acids such as valine, to avoid such errors it has two additional distinct tRNA(Ile)-dependent editing activities. One activity is designated as 'pretransfer' editing and involves the hydrolysis of activated Val-AMP. The other activity is designated 'posttransfer' editing and involves deacylation of mischarged Val-tRNA(Ile). The protein is Isoleucine--tRNA ligase (ileS) of Thermus thermophilus (strain ATCC 27634 / DSM 579 / HB8).